The following is a 156-amino-acid chain: 6,7-dimethyl-8-ribityllumazine synthase (156 aa).

5-amino-6-(D-ribitylamino)uracil is bound by residues phenylalanine 25, 59-61 (AFE), and 83-85 (AVI). 88–89 (AT) lines the (2S)-2-hydroxy-3-oxobutyl phosphate pocket. Histidine 91 (proton donor) is an active-site residue. Phenylalanine 116 provides a ligand contact to 5-amino-6-(D-ribitylamino)uracil. Arginine 130 is a (2S)-2-hydroxy-3-oxobutyl phosphate binding site.

Belongs to the DMRL synthase family.

The enzyme catalyses (2S)-2-hydroxy-3-oxobutyl phosphate + 5-amino-6-(D-ribitylamino)uracil = 6,7-dimethyl-8-(1-D-ribityl)lumazine + phosphate + 2 H2O + H(+). It participates in cofactor biosynthesis; riboflavin biosynthesis; riboflavin from 2-hydroxy-3-oxobutyl phosphate and 5-amino-6-(D-ribitylamino)uracil: step 1/2. Its function is as follows. Catalyzes the formation of 6,7-dimethyl-8-ribityllumazine by condensation of 5-amino-6-(D-ribitylamino)uracil with 3,4-dihydroxy-2-butanone 4-phosphate. This is the penultimate step in the biosynthesis of riboflavin. This is 6,7-dimethyl-8-ribityllumazine synthase from Nitratidesulfovibrio vulgaris (strain DSM 19637 / Miyazaki F) (Desulfovibrio vulgaris).